Consider the following 193-residue polypeptide: Alpha-S2-casein (193 aa).

The first 15 residues, Met1–Ala15, serve as a signal peptide directing secretion. Residues Ser23, Ser24, Ser25, Ser28, Ser47, Ser68, Ser123, Ser125, Ser128, and Ser136 each carry the phosphoserine modification.

Belongs to the alpha-casein family. In terms of tissue distribution, mammary gland specific. Secreted in milk.

Its subcellular location is the secreted. In terms of biological role, important role in the capacity of milk to transport calcium phosphate. The chain is Alpha-S2-casein (CSN1S2) from Camelus dromedarius (Dromedary).